The following is a 492-amino-acid chain: Transcript termination protein OPG145 (492 aa).

The Helicase ATP-binding domain maps to 100-256; that stretch reads MIELKRPLYI…NSIINIAKLS (157 aa). Position 113–120 (113–120) interacts with ATP; that stretch reads LACGFGKT. Residues 206–209 carry the DEAH box motif; sequence DESH.

This sequence belongs to the helicase family. Poxviruses subfamily. In terms of assembly, interacts with OPG087. Might be part of a transcription complex composed at least of OPG087, OPG110, and OPG145.

Its subcellular location is the virion. In terms of biological role, DNA helicase which seems to act as a postreplicative transcription termination factor. Involved in ATP-dependent release of nascent RNA. Forms a stable complex with single-stranded DNA, and to a lesser extent RNA. The protein is Transcript termination protein OPG145 (OPG145) of Cynomys gunnisoni (Gunnison's prairie dog).